The chain runs to 189 residues: Apolipoprotein D (189 aa).

The first 20 residues, 1–20, serve as a signal peptide directing secretion; the sequence is MATMLLLLATLAGLFTTTEG. Residue Q21 is modified to Pyrrolidone carboxylic acid. Cystine bridges form between C28–C134 and C61–C185. N-linked (GlcNAc...) asparagine glycosylation is found at N65 and N98.

The protein belongs to the calycin superfamily. Lipocalin family. Homodimer. In terms of tissue distribution, expressed in liver, kidney, bladder, adrenal, cerebrum, duodenum, testis, lung, spleen, pancreas, heart and skin.

It localises to the secreted. Functionally, APOD occurs in the macromolecular complex with lecithin-transport and binding of bilin. Appears to be able to transport a variety of ligands in a number of different contexts. This Rattus norvegicus (Rat) protein is Apolipoprotein D (Apod).